We begin with the raw amino-acid sequence, 410 residues long: MVLSQRQRDELNRAIADYLRSNGYEEAYSVFKKEAELDVNEELDKKYAGLLEKKWTSVIRLQKKVMELESKLNEAKEEFTSGGPLGQKRDPKEWIPRPPEKYALSGHRSPVTRVIFHPVFSVMVSASEDATIKVWDYETGDFERTLKGHTDSVQDISFDHSGKLLASCSADMTIKLWDFQGFECIRTMHGHDHNVSSVAIMPNGDHIVSASRDKTIKMWEVQTGYCVKTFTGHREWVRMVRPNQDGTLIASCSNDQTVRVWVVATKECKAELREHEHVVECISWAPESSYSSISEATGSETKKSGKPGPFLLSGSRDKTIKMWDVSTGMCLMTLVGHDNWVRGVLFHSGGKFILSCADDKTLRVWDYKNKRCMKTLNAHEHFVTSLDFHKTAPYVVTGSVDQTVKVWECR.

The segment at 1–38 (MVLSQRQRDELNRAIADYLRSNGYEEAYSVFKKEAELD) is required for self-association and interaction with PAFAH1B2 and PAFAH1B3. An interaction with NDE1 region spans residues 1–66 (MVLSQRQRDE…SVIRLQKKVM (66 aa)). An interaction with NDEL1 region spans residues 1 to 102 (MVLSQRQRDE…EWIPRPPEKY (102 aa)). A LisH domain is found at 7–39 (QRDELNRAIADYLRSNGYEEAYSVFKKEAELDV). Residue lysine 53 is modified to N6-acetyllysine. Residues 56–82 (TSVIRLQKKVMELESKLNEAKEEFTSG) adopt a coiled-coil conformation. The segment at 83 to 410 (GPLGQKRDPK…DQTVKVWECR (328 aa)) is interaction with dynein and dynactin. WD repeat units lie at residues 106-147 (GHRS…RTLK), 148-187 (GHTD…CIRT), 190-229 (GHDH…CVKT), 232-271 (GHRE…CKAE), 274-333 (EHEH…CLMT), 336-377 (GHDN…KTLN), and 378-410 (AHEH…WECR). Phosphoserine is present on serine 109. An interaction with DCX region spans residues 367–409 (YKNKRCMKTLNAHEHFVTSLDFHKTAPYVVTGSVDQTVKVWEC). The segment at 388–410 (FHKTAPYVVTGSVDQTVKVWECR) is interaction with NDEL1.

It belongs to the WD repeat LIS1/nudF family. Component of the cytosolic PAF-AH (I) heterotetrameric enzyme, which is composed of PAFAH1B1 (beta), PAFAH1B2 (alpha2) and PAFAH1B3 (alpha1) subunits. The catalytic activity of the enzyme resides in the alpha1 (PAFAH1B3) and alpha2 (PAFAH1B2) subunits, whereas the beta subunit (PAFAH1B1) has regulatory activity. Trimer formation is not essential for the catalytic activity. Interacts with the catalytic dimer of PAF-AH (I) heterotetrameric enzyme: interacts with PAFAH1B2 homodimer (alpha2/alpha2 homodimer), PAFAH1B3 homodimer (alpha1/alpha1 homodimer) and PAFAH1B2-PAFAH1B3 heterodimer (alpha2/alpha1 heterodimer). Interacts with IQGAP1, KATNB1 and NUDC. Interacts with DAB1 when DAB1 is phosphorylated in response to RELN/reelin signaling. Can self-associate. Interacts with DCX, dynein, dynactin, NDE1, NDEL1 and RSN. Interacts with DISC1, and this interaction is enhanced by NDEL1. Interacts with INTS13. Interacts with DCDC1. In terms of tissue distribution, fairly ubiquitous expression in both the frontal and occipital areas of the brain.

It is found in the cytoplasm. The protein resides in the cytoskeleton. Its subcellular location is the microtubule organizing center. It localises to the centrosome. The protein localises to the spindle. It is found in the nucleus membrane. Regulatory subunit (beta subunit) of the cytosolic type I platelet-activating factor (PAF) acetylhydrolase (PAF-AH (I)), an enzyme that catalyzes the hydrolyze of the acetyl group at the sn-2 position of PAF and its analogs and participates in PAF inactivation. Regulates the PAF-AH (I) activity in a catalytic dimer composition-dependent manner. Required for proper activation of Rho GTPases and actin polymerization at the leading edge of locomoting cerebellar neurons and postmigratory hippocampal neurons in response to calcium influx triggered via NMDA receptors. Positively regulates the activity of the minus-end directed microtubule motor protein dynein. May enhance dynein-mediated microtubule sliding by targeting dynein to the microtubule plus end. Required for several dynein- and microtubule-dependent processes such as the maintenance of Golgi integrity, the peripheral transport of microtubule fragments and the coupling of the nucleus and centrosome. Required during brain development for the proliferation of neuronal precursors and the migration of newly formed neurons from the ventricular/subventricular zone toward the cortical plate. Neuronal migration involves a process called nucleokinesis, whereby migrating cells extend an anterior process into which the nucleus subsequently translocates. During nucleokinesis dynein at the nuclear surface may translocate the nucleus towards the centrosome by exerting force on centrosomal microtubules. May also play a role in other forms of cell locomotion including the migration of fibroblasts during wound healing. Required for dynein recruitment to microtubule plus ends and BICD2-bound cargos. May modulate the Reelin pathway through interaction of the PAF-AH (I) catalytic dimer with VLDLR. This is Platelet-activating factor acetylhydrolase IB subunit beta from Homo sapiens (Human).